Here is a 1803-residue protein sequence, read N- to C-terminus: Pyruvate dehydrogenase [NADP(+)], mitochondrial (1803 aa).

The N-terminal 37 residues, M1–Y37, are a transit peptide targeting the mitochondrion. 4Fe-4S ferredoxin-type domains lie at F747–L776 and F802–A831. Residues C756, C759, C762, C766, C811, C814, C817, and C821 each coordinate [4Fe-4S] cluster. Positions V1248 to W1391 constitute a Flavodoxin-like domain. An FAD-binding FR-type domain is found at K1425–D1650. FAD-binding positions include Y1458–E1469 and I1585–A1595.

In the N-terminal section; belongs to the pyruvate:ferredoxin/flavodoxin oxidoreductase family. As to quaternary structure, homodimer. The cofactor is FAD. FMN is required as a cofactor. Requires thiamine diphosphate as cofactor. It depends on iron-sulfur cluster as a cofactor.

The protein localises to the mitochondrion. It catalyses the reaction pyruvate + NADP(+) + CoA = acetyl-CoA + CO2 + NADPH. Functionally, pyruvate dehydrogenase [NADP(+)] is one of three enzymes participating in respiratory metabolism. The enzyme is also active with 2-oxobutyrate and oxaloacetate. The enzyme is oxygen sensitive. The sequence is that of Pyruvate dehydrogenase [NADP(+)], mitochondrial (PNO) from Euglena gracilis.